Reading from the N-terminus, the 836-residue chain is Phenylalanine--tRNA ligase beta subunit (836 aa).

The tRNA-binding domain occupies 44 to 160 (PETTGPLVIG…EIAEPGTDAR (117 aa)). Positions 420 to 495 (PSMPQIRMKT…RLEGLEDIPT (76 aa)) constitute a B5 domain. Aspartate 473, aspartate 479, glutamate 482, and glutamate 483 together coordinate Mg(2+). One can recognise an FDX-ACB domain in the interval 742 to 835 (SAFPVLHQDL…AAELFGATMR (94 aa)).

This sequence belongs to the phenylalanyl-tRNA synthetase beta subunit family. Type 1 subfamily. In terms of assembly, tetramer of two alpha and two beta subunits. Mg(2+) serves as cofactor.

It is found in the cytoplasm. The catalysed reaction is tRNA(Phe) + L-phenylalanine + ATP = L-phenylalanyl-tRNA(Phe) + AMP + diphosphate + H(+). This chain is Phenylalanine--tRNA ligase beta subunit, found in Corynebacterium diphtheriae (strain ATCC 700971 / NCTC 13129 / Biotype gravis).